The sequence spans 341 residues: tRNA N6-adenosine threonylcarbamoyltransferase (341 aa).

Positions 111 and 115 each coordinate Fe cation. Residues 133–137 (AVSGG), Asp-166, Gly-179, Asp-183, and Asn-273 contribute to the substrate site. Residue Asp-301 coordinates Fe cation.

This sequence belongs to the KAE1 / TsaD family. The cofactor is Fe(2+).

It localises to the cytoplasm. The catalysed reaction is L-threonylcarbamoyladenylate + adenosine(37) in tRNA = N(6)-L-threonylcarbamoyladenosine(37) in tRNA + AMP + H(+). Required for the formation of a threonylcarbamoyl group on adenosine at position 37 (t(6)A37) in tRNAs that read codons beginning with adenine. Is involved in the transfer of the threonylcarbamoyl moiety of threonylcarbamoyl-AMP (TC-AMP) to the N6 group of A37, together with TsaE and TsaB. TsaD likely plays a direct catalytic role in this reaction. The sequence is that of tRNA N6-adenosine threonylcarbamoyltransferase from Geotalea daltonii (strain DSM 22248 / JCM 15807 / FRC-32) (Geobacter daltonii).